A 62-amino-acid polypeptide reads, in one-letter code: UPF0337 protein XAC0100 (62 aa).

The protein belongs to the UPF0337 (CsbD) family.

This Xanthomonas axonopodis pv. citri (strain 306) protein is UPF0337 protein XAC0100.